Reading from the N-terminus, the 78-residue chain is Defensin beta 136 (78 aa).

The signal sequence occupies residues 1–21 (MNLCLSSLLFFLVILLPSGKG). 3 cysteine pairs are disulfide-bonded: C33–C60, C40–C54, and C44–C61.

It belongs to the beta-defensin family.

Its subcellular location is the secreted. Functionally, host defense peptide that exhibits antimicrobial and antifungal activity. Exhibits antimicrobial activity against E.coli, S.aureus and C.albicans (in vitro). Has high lipopolysaccharide (LPS)-binding affinity, and may thereby be involved in immunoregulation through LPS neutralization. The protein is Defensin beta 136 (DEFB136) of Pan troglodytes (Chimpanzee).